A 515-amino-acid polypeptide reads, in one-letter code: Sterol 14-alpha demethylase cyp51A (515 aa).

A helical membrane pass occupies residues 7–29; sequence LTAYMAVAVLTAILLNVVYQLFF. 2 N-linked (GlcNAc...) asparagine glycosylation sites follow: Asn-33 and Asn-269. Cys-454 lines the heme pocket. N-linked (GlcNAc...) asparagine glycosylation occurs at Asn-512.

It belongs to the cytochrome P450 family. Heme is required as a cofactor.

Its subcellular location is the endoplasmic reticulum membrane. It catalyses the reaction a 14alpha-methyl steroid + 3 reduced [NADPH--hemoprotein reductase] + 3 O2 = a Delta(14) steroid + formate + 3 oxidized [NADPH--hemoprotein reductase] + 4 H2O + 4 H(+). It carries out the reaction a 14alpha-methyl steroid + reduced [NADPH--hemoprotein reductase] + O2 = a 14alpha-hydroxymethyl steroid + oxidized [NADPH--hemoprotein reductase] + H2O + H(+). The enzyme catalyses a 14alpha-hydroxymethyl steroid + reduced [NADPH--hemoprotein reductase] + O2 = a 14alpha-formyl steroid + oxidized [NADPH--hemoprotein reductase] + 2 H2O + H(+). The catalysed reaction is a 14alpha-formyl steroid + reduced [NADPH--hemoprotein reductase] + O2 = a Delta(14) steroid + formate + oxidized [NADPH--hemoprotein reductase] + H2O + 2 H(+). It catalyses the reaction lanosterol + 3 reduced [NADPH--hemoprotein reductase] + 3 O2 = 4,4-dimethyl-5alpha-cholesta-8,14,24-trien-3beta-ol + formate + 3 oxidized [NADPH--hemoprotein reductase] + 4 H2O + 4 H(+). It carries out the reaction lanosterol + reduced [NADPH--hemoprotein reductase] + O2 = 32-hydroxylanosterol + oxidized [NADPH--hemoprotein reductase] + H2O + H(+). The enzyme catalyses 32-hydroxylanosterol + reduced [NADPH--hemoprotein reductase] + O2 = 32-oxolanosterol + oxidized [NADPH--hemoprotein reductase] + 2 H2O + H(+). The catalysed reaction is 32-oxolanosterol + reduced [NADPH--hemoprotein reductase] + O2 = 4,4-dimethyl-5alpha-cholesta-8,14,24-trien-3beta-ol + formate + oxidized [NADPH--hemoprotein reductase] + H2O + 2 H(+). It catalyses the reaction eburicol + 3 reduced [NADPH--hemoprotein reductase] + 3 O2 = 14-demethyleburicol + formate + 3 oxidized [NADPH--hemoprotein reductase] + 4 H2O + 4 H(+). It carries out the reaction eburicol + reduced [NADPH--hemoprotein reductase] + O2 = 32-hydroxyeburicol + oxidized [NADPH--hemoprotein reductase] + H2O + H(+). The enzyme catalyses 32-hydroxyeburicol + reduced [NADPH--hemoprotein reductase] + O2 = 32-oxoeburicol + oxidized [NADPH--hemoprotein reductase] + 2 H2O + H(+). The catalysed reaction is 32-oxoeburicol + reduced [NADPH--hemoprotein reductase] + O2 = 14-demethyleburicol + formate + oxidized [NADPH--hemoprotein reductase] + H2O + 2 H(+). It participates in steroid metabolism; ergosterol biosynthesis. Its activity is regulated as follows. The sterol 14-alpha demethylase activity is inhibited by azole compounds. Activity is inhibited by the novel and long-acting fungicidal azole, PC1244. In terms of biological role, sterol 14alpha-demethylase, encoded by cyp51A and cyp51B, that plays a critical role in the third module of ergosterol biosynthesis pathway, being ergosterol the major sterol component in fungal membranes that participates in a variety of functions. The third module or late pathway involves the ergosterol synthesis itself through consecutive reactions that mainly occur in the endoplasmic reticulum (ER) membrane. In filamentous fungi, during the initial step of this module, lanosterol (lanosta-8,24-dien-3beta-ol) can be metabolized to eburicol. Sterol 14alpha-demethylase catalyzes the three-step oxidative removal of the 14alpha-methyl group (C-32) of both these sterols in the form of formate, and converts eburicol and lanosterol to 14-demethyleburicol (4,4,24-trimethylergosta-8,14,24(28)-trienol) and 4,4-dimethyl-5alpha-cholesta-8,14,24-trien-3beta-ol, respectively, which are further metabolized by other enzymes in the pathway to ergosterol. Can also use substrates not intrinsic to fungi, such as 24,25-dihydrolanosterol (DHL), producing 4,4'-dimethyl-8,14-cholestadien-3-beta-ol, but at lower rates than the endogenous substrates. As a target of azole drugs, plays a crucial role in azole susceptibility. This Aspergillus fumigatus (strain ATCC MYA-4609 / CBS 101355 / FGSC A1100 / Af293) (Neosartorya fumigata) protein is Sterol 14-alpha demethylase cyp51A.